The primary structure comprises 92 residues: Acylphosphatase (92 aa).

The Acylphosphatase-like domain occupies 3 to 90; sequence RVHVLVAGRV…GEFTEFAVLR (88 aa). Active-site residues include arginine 18 and asparagine 36.

The protein belongs to the acylphosphatase family.

It catalyses the reaction an acyl phosphate + H2O = a carboxylate + phosphate + H(+). The polypeptide is Acylphosphatase (acyP) (Methylococcus capsulatus (strain ATCC 33009 / NCIMB 11132 / Bath)).